Reading from the N-terminus, the 273-residue chain is Energy-coupling factor transporter ATP-binding protein EcfA (273 aa).

The 236-residue stretch at 2–237 folds into the ABC transporter domain; it reads ISIRDLTYFY…RASLLALGLA (236 aa). Residue 36–43 coordinates ATP; it reads GRNGSGKS.

This sequence belongs to the ABC transporter superfamily. Energy-coupling factor EcfA family. As to quaternary structure, forms a stable energy-coupling factor (ECF) transporter complex composed of 2 membrane-embedded substrate-binding proteins (S component), 2 ATP-binding proteins (A component) and 2 transmembrane proteins (T component).

The protein localises to the cell membrane. Functionally, ATP-binding (A) component of a common energy-coupling factor (ECF) ABC-transporter complex. Unlike classic ABC transporters this ECF transporter provides the energy necessary to transport a number of different substrates. The protein is Energy-coupling factor transporter ATP-binding protein EcfA of Syntrophomonas wolfei subsp. wolfei (strain DSM 2245B / Goettingen).